Here is a 188-residue protein sequence, read N- to C-terminus: Putative ankyrin repeat protein FPV230 (188 aa).

ANK repeat units follow at residues 2–31 (ENEL…NPNA), 36–65 (KYMI…DANV), 135–164 (LGST…DINI), and 168–187 (NNNT…YLKC).

This chain is Putative ankyrin repeat protein FPV230, found in Vertebrata (FPV).